Consider the following 306-residue polypeptide: Aspartate carbamoyltransferase catalytic subunit (306 aa).

Positions 51 and 52 each coordinate carbamoyl phosphate. L-aspartate is bound at residue Lys79. Carbamoyl phosphate contacts are provided by Arg101, His129, and Gln132. L-aspartate is bound by residues Arg162 and Arg213. Carbamoyl phosphate-binding residues include Ala254 and Pro255.

This sequence belongs to the aspartate/ornithine carbamoyltransferase superfamily. ATCase family. Heterododecamer (2C3:3R2) of six catalytic PyrB chains organized as two trimers (C3), and six regulatory PyrI chains organized as three dimers (R2).

It catalyses the reaction carbamoyl phosphate + L-aspartate = N-carbamoyl-L-aspartate + phosphate + H(+). It functions in the pathway pyrimidine metabolism; UMP biosynthesis via de novo pathway; (S)-dihydroorotate from bicarbonate: step 2/3. Functionally, catalyzes the condensation of carbamoyl phosphate and aspartate to form carbamoyl aspartate and inorganic phosphate, the committed step in the de novo pyrimidine nucleotide biosynthesis pathway. This is Aspartate carbamoyltransferase catalytic subunit from Bacillus thuringiensis (strain Al Hakam).